The following is a 75-amino-acid chain: Sec-independent protein translocase protein TatA (75 aa).

Residues 1-21 (MGSFSIWHWLIVLVIVLLVFG) traverse the membrane as a helical segment. A disordered region spans residues 41-75 (KGMHDDDKPAGKLGDDSRSAEQAREAQAERDRDAR).

The protein belongs to the TatA/E family. As to quaternary structure, the Tat system comprises two distinct complexes: a TatABC complex, containing multiple copies of TatA, TatB and TatC subunits, and a separate TatA complex, containing only TatA subunits. Substrates initially bind to the TatABC complex, which probably triggers association of the separate TatA complex to form the active translocon.

The protein localises to the cell inner membrane. Part of the twin-arginine translocation (Tat) system that transports large folded proteins containing a characteristic twin-arginine motif in their signal peptide across membranes. TatA could form the protein-conducting channel of the Tat system. This chain is Sec-independent protein translocase protein TatA, found in Xanthomonas campestris pv. campestris (strain 8004).